A 644-amino-acid polypeptide reads, in one-letter code: MISRYSRRPVSHNLEIRGLSRSCLDQHPLPEEADNGTAHSSRLLHNLQEDMSLYSRSEESSASSVRSGCQTLTTDDTVPSWSGIHSYTGTGISTERSSVFSWGYDEFDKAASRQVQQMFEEIDELLYERKCETQLKGLQDECQEWAFRFPHLRILGTQVVCPTDEGFQWYATPAQTPSPSSSFQSKENTVSELYVQGRRAVLCRPTVEVTNPSIRTSGNNEDELPSVIEAEGLIEEYLAYDCRDMDEECEREYVSRRRRRRRCLPPVSPYRCRQEAVLDMLFDDVWRELIGWIEELVRKHWDGYVLDDEKSTVALSPKCPDPQNPFMLPSNVSTVLPPLSQTRTQQLTTNLQAQTSRVPVGPAVAHHNLNDLIMIHGIPLQQRNLGTLDRLNQSDCRDSEDKVSHRPGSSVIPAGKPRPRRALDQSTSSLTRPPQSARRRNPPPRNLMPITSSVTQPITTMEEVVRGTRLTTPSDRLTSPPMHLSRNTLLPPIGTGDIDHVYSGQHTRLIQKQRGSSSRAHSAVTDEGISLQPRDKLHLLDVFSRPNTTHTFRSDTPYHRSFTGIDNIGQGRPGRASVGVDSLGIGVTGISLGISSSSFIDSFSHRPMGHFPIGHEEEPDAKASGQARSHNRGGSTARSSRPGL.

Disordered regions lie at residues 392–490 (NQSD…NTLL), 551–575 (TFRS…RPGR), and 609–644 (GHFP…RPGL). Over residues 395–404 (DCRDSEDKVS) the composition is skewed to basic and acidic residues. Positions 449–459 (PITSSVTQPIT) are enriched in polar residues. The segment covering 626–644 (QARSHNRGGSTARSSRPGL) has biased composition (polar residues).

This sequence belongs to the FAM149 family.

The polypeptide is Protein FAM149B1 (fam149b1) (Danio rerio (Zebrafish)).